Reading from the N-terminus, the 124-residue chain is Meiotically up-regulated gene 103 protein (124 aa).

It localises to the nucleus. The protein resides in the nucleolus. Its function is as follows. Has a role in meiosis. The polypeptide is Meiotically up-regulated gene 103 protein (mug103) (Schizosaccharomyces pombe (strain 972 / ATCC 24843) (Fission yeast)).